A 527-amino-acid chain; its full sequence is T-complex protein 1 subunit beta (527 aa).

This sequence belongs to the TCP-1 chaperonin family. Heterooligomeric complex of about 850 to 900 kDa that forms two stacked rings, 12 to 16 nm in diameter.

The protein localises to the cytoplasm. Molecular chaperone; assists the folding of proteins upon ATP hydrolysis. Known to play a role, in vitro, in the folding of actin and tubulin. This chain is T-complex protein 1 subunit beta, found in Arabidopsis thaliana (Mouse-ear cress).